The chain runs to 232 residues: Ribonuclease 3 (232 aa).

One can recognise an RNase III domain in the interval 6-135; sequence QDYLAKTYGI…FIGALYLDQG (130 aa). E48 is a Mg(2+) binding site. D52 is an active-site residue. 2 residues coordinate Mg(2+): D121 and E124. The active site involves E124. The 70-residue stretch at 161 to 230 folds into the DRBM domain; sequence DAKTSLQEFL…AKHALEKLRM (70 aa).

This sequence belongs to the ribonuclease III family. In terms of assembly, homodimer. Mg(2+) serves as cofactor.

The protein resides in the cytoplasm. It catalyses the reaction Endonucleolytic cleavage to 5'-phosphomonoester.. Digests double-stranded RNA. Involved in the processing of primary rRNA transcript to yield the immediate precursors to the large and small rRNAs (23S and 16S). Processes some mRNAs, and tRNAs when they are encoded in the rRNA operon. Processes pre-crRNA and tracrRNA of type II CRISPR loci if present in the organism. This is Ribonuclease 3 from Limosilactobacillus fermentum (strain NBRC 3956 / LMG 18251) (Lactobacillus fermentum).